The chain runs to 123 residues: MALLKISVVVPEGEVYTGEVKSVVLPGVEGEFGVLYGHSNMITLLQAGVVEIETENQKEHIAINWGYAEVTNERVDILADGAVFIKKGSDDRDDAISRAKKLLEDASSDRLAVSSVLAKIESL.

Belongs to the ATPase epsilon chain family. As to quaternary structure, F-type ATPases have 2 components, CF(1) - the catalytic core - and CF(0) - the membrane proton channel. CF(1) has five subunits: alpha(3), beta(3), gamma(1), delta(1), epsilon(1). CF(0) has three main subunits: a, b and c.

The protein localises to the cell inner membrane. Its function is as follows. Produces ATP from ADP in the presence of a proton gradient across the membrane. The sequence is that of ATP synthase epsilon chain from Helicobacter pylori (strain P12).